A 198-amino-acid chain; its full sequence is Large ribosomal subunit protein bL9 (198 aa).

Residues 156-166 are compositionally biased toward basic and acidic residues; that stretch reads RGEDISTRQED. The segment at 156–198 is disordered; sequence RGEDISTRQEDQDAAAEALAAAGEFFDPEAHNDGEQEEEAGDK.

The protein belongs to the bacterial ribosomal protein bL9 family.

Functionally, binds to the 23S rRNA. The polypeptide is Large ribosomal subunit protein bL9 (Rhodopseudomonas palustris (strain BisB18)).